The primary structure comprises 345 residues: tRNA-dihydrouridine(20/20a) synthase (345 aa).

FMN is bound by residues 32-34 (PML) and Gln-84. Residue Cys-114 is the Proton donor of the active site. FMN contacts are provided by residues Lys-153, His-186, 226–228 (NGG), and 248–249 (GR).

The protein belongs to the Dus family. DusA subfamily. FMN is required as a cofactor.

The enzyme catalyses 5,6-dihydrouridine(20) in tRNA + NADP(+) = uridine(20) in tRNA + NADPH + H(+). It catalyses the reaction 5,6-dihydrouridine(20) in tRNA + NAD(+) = uridine(20) in tRNA + NADH + H(+). It carries out the reaction 5,6-dihydrouridine(20a) in tRNA + NADP(+) = uridine(20a) in tRNA + NADPH + H(+). The catalysed reaction is 5,6-dihydrouridine(20a) in tRNA + NAD(+) = uridine(20a) in tRNA + NADH + H(+). Its function is as follows. Catalyzes the synthesis of 5,6-dihydrouridine (D), a modified base found in the D-loop of most tRNAs, via the reduction of the C5-C6 double bond in target uridines. Specifically modifies U20 and U20a in tRNAs. This is tRNA-dihydrouridine(20/20a) synthase from Escherichia coli O157:H7.